The chain runs to 505 residues: Cytochrome P450 71A2 (505 aa).

A helical transmembrane segment spans residues 7–27 (WYSLLIPLFVFIFLLIHHCFF). Position 448 (cysteine 448) interacts with heme.

It belongs to the cytochrome P450 family. It depends on heme as a cofactor.

It is found in the membrane. Functionally, may have a role in maturation, such as during flavor formation or other metabolite production specific to aging tissues. The chain is Cytochrome P450 71A2 (CYP71A2) from Solanum melongena (Eggplant).